We begin with the raw amino-acid sequence, 201 residues long: Large ribosomal subunit protein uL4 (201 aa).

The interval 46–71 (QKTRAEVIGSGKKPWRQKGTGRARAG) is disordered.

This sequence belongs to the universal ribosomal protein uL4 family. As to quaternary structure, part of the 50S ribosomal subunit.

One of the primary rRNA binding proteins, this protein initially binds near the 5'-end of the 23S rRNA. It is important during the early stages of 50S assembly. It makes multiple contacts with different domains of the 23S rRNA in the assembled 50S subunit and ribosome. In terms of biological role, forms part of the polypeptide exit tunnel. The polypeptide is Large ribosomal subunit protein uL4 (Shewanella sediminis (strain HAW-EB3)).